The primary structure comprises 557 residues: Coiled-coil domain-containing protein 22 homolog (557 aa).

Coiled coils occupy residues 260–350 and 489–554; these read RLGQ…LQSQ and ELTA…AGRN.

This sequence belongs to the CCDC22 family.

The protein is Coiled-coil domain-containing protein 22 homolog of Anopheles gambiae (African malaria mosquito).